The primary structure comprises 388 residues: Succinate--CoA ligase [ADP-forming] subunit beta (388 aa).

An ATP-grasp domain is found at 9–244 (KQIFAEYQLP…PSQEDPREAL (236 aa)). ATP is bound by residues Lys-46, 53-55 (GRG), Glu-99, Ser-102, and Glu-107. Mg(2+) is bound by residues Asn-199 and Asp-213. Substrate is bound by residues Asn-264 and 321 to 323 (GIV).

It belongs to the succinate/malate CoA ligase beta subunit family. As to quaternary structure, heterotetramer of two alpha and two beta subunits. Requires Mg(2+) as cofactor.

It carries out the reaction succinate + ATP + CoA = succinyl-CoA + ADP + phosphate. The enzyme catalyses GTP + succinate + CoA = succinyl-CoA + GDP + phosphate. Its pathway is carbohydrate metabolism; tricarboxylic acid cycle; succinate from succinyl-CoA (ligase route): step 1/1. Functionally, succinyl-CoA synthetase functions in the citric acid cycle (TCA), coupling the hydrolysis of succinyl-CoA to the synthesis of either ATP or GTP and thus represents the only step of substrate-level phosphorylation in the TCA. The beta subunit provides nucleotide specificity of the enzyme and binds the substrate succinate, while the binding sites for coenzyme A and phosphate are found in the alpha subunit. The sequence is that of Succinate--CoA ligase [ADP-forming] subunit beta from Pasteurella multocida (strain Pm70).